Reading from the N-terminus, the 127-residue chain is Insulin-like growth factor 3.L (127 aa).

A signal peptide spans Met1 to Ala49. A b region spans residues Ala49–Val80. Disulfide bonds link Cys61/Cys99, Cys73/Cys112, and Cys98/Cys103. The interval Ser81 to Pro92 is c. An a region spans residues Gly93–Ala113. Residues Ala114 to Gly121 are d. The propeptide at Arg122 to Ser127 is e peptide.

This sequence belongs to the insulin family.

It localises to the secreted. Its function is as follows. The insulin-like growth factors, isolated from plasma, are structurally and functionally related to insulin but have a much higher growth-promoting activity. Promotes anterior neural development. In Xenopus laevis (African clawed frog), this protein is Insulin-like growth factor 3.L.